The chain runs to 184 residues: Cathelicidin-related peptide Pt_CRAMP2 (184 aa).

Residues 1-22 (MDGFFWKTWLVVAALAIGGTSS) form the signal peptide. Positions 23 to 150 (LPHKPLTYEE…EDEKDQPRRV (128 aa)) are excised as a propeptide. Cystine bridges form between Cys-81–Cys-92 and Cys-103–Cys-120. The segment covering 125–144 (EDEEQNQEEEEEEEKEEDEK) has biased composition (acidic residues). The interval 125 to 147 (EDEEQNQEEEEEEEKEEDEKDQP) is disordered.

The protein belongs to the cathelicidin family. As to expression, expressed by the venom gland.

It is found in the secreted. Its subcellular location is the target cell membrane. Its function is as follows. Potent antimicrobial peptide against most of Gram-negative bacteria, some Gram-positive bacteria (Bacillus) and some fungi (C.albicans, P.pastoris, A.terreus, A.nidulans, and C.globosum). Adopts an amphipathic alpha helical conformation, that may allow to partition into the target membrane. No hemolytic and cytotoxic activities have been observed on mammalian cells. The protein is Cathelicidin-related peptide Pt_CRAMP2 of Pseudonaja textilis (Eastern brown snake).